Here is a 195-residue protein sequence, read N- to C-terminus: uncharacterized protein (195 aa).

The 132-residue stretch at 34-165 (SHHAAVLIPI…WLDIHRGGVN (132 aa)) folds into the Nudix hydrolase domain. The short motif at 72–94 (GKADPQDSSLIETALREAEEEVA) is the Nudix box element. The Mg(2+) site is built by E88 and E92.

Belongs to the Nudix hydrolase family. PCD1 subfamily. The cofactor is Mn(2+). Requires Mg(2+) as cofactor.

Its function is as follows. Probably mediates the hydrolysis of some nucleoside diphosphate derivatives. This is an uncharacterized protein from Yersinia enterocolitica serotype O:8 / biotype 1B (strain NCTC 13174 / 8081).